A 435-amino-acid chain; its full sequence is Zinc finger and BTB domain-containing protein 25 (435 aa).

The BTB domain maps to 1-107; that stretch reads MDTASHSLVL…GIRFLHADYL (107 aa). Glycyl lysine isopeptide (Lys-Gly) (interchain with G-Cter in SUMO2) cross-links involve residues Lys142, Lys148, Lys198, and Lys204. A C2H2-type 1 zinc finger spans residues 238 to 260; the sequence is HLCHYCGERFDSRSNLRQHLHTH. Glycyl lysine isopeptide (Lys-Gly) (interchain with G-Cter in SUMO2) cross-links involve residues Lys303 and Lys330. The C2H2-type 2 zinc finger occupies 349 to 371; it reads MSCTICGHKFPRKSQLLEHMYTH. Residue Lys405 forms a Glycyl lysine isopeptide (Lys-Gly) (interchain with G-Cter in SUMO2) linkage.

As to expression, expressed mainly in hematopoietic cells and testis.

It localises to the nucleus. In terms of biological role, may be involved in transcriptional regulation. This chain is Zinc finger and BTB domain-containing protein 25 (ZBTB25), found in Homo sapiens (Human).